The following is a 61-amino-acid chain: Probradykinin-1 (61 aa).

The first 22 residues, 1–22, serve as a signal peptide directing secretion; it reads MSFLKKSLFLVLFLGLVSFSIC. Positions 23–48 are excised as a propeptide; the sequence is EEEKRETEEEENKDETEEQSEEKKRF. The disordered stretch occupies residues 24-61; that stretch reads EEKRETEEEENKDETEEQSEEKKRFEPVPPGFTPFRLT. A compositionally biased stretch (acidic residues) spans 30–42; the sequence is EEEENKDETEEQS.

It belongs to the frog skin active peptide (FSAP) family. Bradykinin-related peptide subfamily. Expressed by the skin glands.

It is found in the secreted. In terms of biological role, may produce in vitro relaxation of rat arterial smooth muscle and constriction of intestinal smooth muscle. May target bradykinin receptors (BDKRB). The protein is Probradykinin-1 of Pithecopus azureus (Orange-legged monkey tree frog).